Here is an 89-residue protein sequence, read N- to C-terminus: Small ribosomal subunit protein uS14A (89 aa).

This sequence belongs to the universal ribosomal protein uS14 family. In terms of assembly, part of the 30S ribosomal subunit. Contacts proteins S3 and S10.

Binds 16S rRNA, required for the assembly of 30S particles and may also be responsible for determining the conformation of the 16S rRNA at the A site. The chain is Small ribosomal subunit protein uS14A from Staphylococcus haemolyticus (strain JCSC1435).